The sequence spans 582 residues: 5-aminolevulinate synthase, erythroid-specific, mitochondrial (582 aa).

A mitochondrion-targeting transit peptide spans 1–44; sequence MLLQRCPVLIRSPTAILGKMIKTHQFLIGIGRCPILATQGTTCS. Residue Arg-158 participates in succinyl-CoA binding. Cys-253 and Phe-254 together coordinate pyridoxal 5'-phosphate. 2 residues coordinate succinyl-CoA: Ser-275 and Lys-294. 3 residues coordinate pyridoxal 5'-phosphate: Ser-327, His-355, and Thr-383. Residue Lys-386 is part of the active site. At Lys-386 the chain carries N6-(pyridoxal phosphate)lysine. Residues Thr-415 and Thr-416 each contribute to the pyridoxal 5'-phosphate site. Thr-503 provides a ligand contact to succinyl-CoA.

It belongs to the class-II pyridoxal-phosphate-dependent aminotransferase family. Homodimer. Pyridoxal 5'-phosphate serves as cofactor.

Its subcellular location is the mitochondrion inner membrane. It carries out the reaction succinyl-CoA + glycine + H(+) = 5-aminolevulinate + CO2 + CoA. It functions in the pathway porphyrin-containing compound metabolism; protoporphyrin-IX biosynthesis; 5-aminolevulinate from glycine: step 1/1. Catalyzes the pyridoxal 5'-phosphate (PLP)-dependent condensation of succinyl-CoA and glycine to form aminolevulinic acid (ALA), with CoA and CO2 as by-products. Contributes significantly to heme formation during erythropoiesis. The sequence is that of 5-aminolevulinate synthase, erythroid-specific, mitochondrial (ALAS2) from Delphinapterus leucas (Beluga whale).